The chain runs to 434 residues: Gamma-glutamyl phosphate reductase (434 aa).

Belongs to the gamma-glutamyl phosphate reductase family.

It is found in the cytoplasm. The catalysed reaction is L-glutamate 5-semialdehyde + phosphate + NADP(+) = L-glutamyl 5-phosphate + NADPH + H(+). It functions in the pathway amino-acid biosynthesis; L-proline biosynthesis; L-glutamate 5-semialdehyde from L-glutamate: step 2/2. Functionally, catalyzes the NADPH-dependent reduction of L-glutamate 5-phosphate into L-glutamate 5-semialdehyde and phosphate. The product spontaneously undergoes cyclization to form 1-pyrroline-5-carboxylate. In Rhodopirellula baltica (strain DSM 10527 / NCIMB 13988 / SH1), this protein is Gamma-glutamyl phosphate reductase.